A 261-amino-acid polypeptide reads, in one-letter code: Aminoglycoside N(3)-acetyltransferase IV (261 aa).

It belongs to the antibiotic N-acetyltransferase family.

The catalysed reaction is a 2-deoxystreptamine antibiotic + acetyl-CoA = an N(3)-acetyl-2-deoxystreptamine antibiotic + CoA + H(+). Resistance to antibiotics containing the 2-deoxy-streptamine ring including gentamicin, kanamycin, tobramycin, neomycin and apramycin. The polypeptide is Aminoglycoside N(3)-acetyltransferase IV (aacC4) (Salmonella sp).